The following is a 377-amino-acid chain: Queuine tRNA-ribosyltransferase (377 aa).

D94 functions as the Proton acceptor in the catalytic mechanism. Substrate contacts are provided by residues D94–F98, D148, Q191, and G218. Residues G249–D255 are RNA binding. D268 acts as the Nucleophile in catalysis. Positions T273 to R277 are RNA binding; important for wobble base 34 recognition.

This sequence belongs to the queuine tRNA-ribosyltransferase family. Homodimer. Within each dimer, one monomer is responsible for RNA recognition and catalysis, while the other monomer binds to the replacement base PreQ1.

It carries out the reaction 7-aminomethyl-7-carbaguanine + guanosine(34) in tRNA = 7-aminomethyl-7-carbaguanosine(34) in tRNA + guanine. It participates in tRNA modification; tRNA-queuosine biosynthesis. Catalyzes the base-exchange of a guanine (G) residue with the queuine precursor 7-aminomethyl-7-deazaguanine (PreQ1) at position 34 (anticodon wobble position) in tRNAs with GU(N) anticodons (tRNA-Asp, -Asn, -His and -Tyr). Catalysis occurs through a double-displacement mechanism. The nucleophile active site attacks the C1' of nucleotide 34 to detach the guanine base from the RNA, forming a covalent enzyme-RNA intermediate. The proton acceptor active site deprotonates the incoming PreQ1, allowing a nucleophilic attack on the C1' of the ribose to form the product. After dissociation, two additional enzymatic reactions on the tRNA convert PreQ1 to queuine (Q), resulting in the hypermodified nucleoside queuosine (7-(((4,5-cis-dihydroxy-2-cyclopenten-1-yl)amino)methyl)-7-deazaguanosine). The polypeptide is Queuine tRNA-ribosyltransferase (Brucella suis biovar 1 (strain 1330)).